The chain runs to 499 residues: Phenylalanine--tRNA ligase alpha subunit (499 aa).

Residues T330, 372–374, and Y412 contribute to the L-phenylalanine site; that span reads QVE. E414 contributes to the Mg(2+) binding site. F438 is an L-phenylalanine binding site.

This sequence belongs to the class-II aminoacyl-tRNA synthetase family. Phe-tRNA synthetase alpha subunit type 2 subfamily. In terms of assembly, tetramer of two alpha and two beta subunits. The cofactor is Mg(2+).

It is found in the cytoplasm. The catalysed reaction is tRNA(Phe) + L-phenylalanine + ATP = L-phenylalanyl-tRNA(Phe) + AMP + diphosphate + H(+). This is Phenylalanine--tRNA ligase alpha subunit (frs2) from Schizosaccharomyces pombe (strain 972 / ATCC 24843) (Fission yeast).